Consider the following 191-residue polypeptide: RNA polymerase sigma factor CnrH (191 aa).

The Polymerase core binding signature appears at 49 to 62 (DVVQDTFVAAWHAL). Positions 156–175 (QPEAAAVLGLSVKAVEGRIG) form a DNA-binding region, H-T-H motif.

This sequence belongs to the sigma-70 factor family. ECF subfamily.

In terms of biological role, sigma factors are initiation factors that promote the attachment of RNA polymerase to specific initiation sites and are then released. This sigma factor regulates the genes for a membrane-located efflux system that confers resistance to nickel and cobalt. Functionally, cnrH alone is able to activate CNR expression, while both CnrY and CrnX are needed for nickel induction of cnrH. Binds DNA in an RNA polymerase-dependent fashion. CnrH may be controlled by a CnrYX transmembrane anti-sigma factor complex which binds CnrH in the absence of Ni(2+). If Ni(2+) appears in the periplasm, it may be bound by CnrR (CnrX); the signal then would be transmitted by CnrY into the cytoplasm and CnrH would be released. The chain is RNA polymerase sigma factor CnrH (cnrH) from Cupriavidus metallidurans (strain ATCC 43123 / DSM 2839 / NBRC 102507 / CH34) (Ralstonia metallidurans).